Consider the following 338-residue polypeptide: Phenylalanine--tRNA ligase alpha subunit (338 aa).

E252 contributes to the Mg(2+) binding site.

This sequence belongs to the class-II aminoacyl-tRNA synthetase family. Phe-tRNA synthetase alpha subunit type 1 subfamily. Tetramer of two alpha and two beta subunits. It depends on Mg(2+) as a cofactor.

The protein localises to the cytoplasm. The catalysed reaction is tRNA(Phe) + L-phenylalanine + ATP = L-phenylalanyl-tRNA(Phe) + AMP + diphosphate + H(+). This chain is Phenylalanine--tRNA ligase alpha subunit, found in Pseudomonas fluorescens (strain Pf0-1).